Here is a 103-residue protein sequence, read N- to C-terminus: Small ribosomal subunit protein uS10 (103 aa).

This sequence belongs to the universal ribosomal protein uS10 family. In terms of assembly, part of the 30S ribosomal subunit.

Involved in the binding of tRNA to the ribosomes. The protein is Small ribosomal subunit protein uS10 of Pseudoalteromonas atlantica (strain T6c / ATCC BAA-1087).